A 76-amino-acid polypeptide reads, in one-letter code: Kappa-actitoxin-Avd4m (76 aa).

A signal peptide spans 1 to 19; the sequence is MNKALFLCLVVLCAAVVFA. The propeptide occupies 20–31; the sequence is AEDLQKAKHAPF. Intrachain disulfides connect C37-C72, C39-C65, and C55-C73.

Belongs to the sea anemone type 3 (BDS) potassium channel toxin family. Weakly expressed in the ectodermal tissue from the distal and proximal tentacles, body wall, and oral disk.

It is found in the secreted. The protein resides in the nematocyst. In terms of biological role, blocks Kv3 voltage-gated potassium channels. Reduces blood pressure. This chain is Kappa-actitoxin-Avd4m, found in Anemonia viridis (Snakelocks anemone).